Consider the following 207-residue polypeptide: Large ribosomal subunit protein bL25 (207 aa).

Belongs to the bacterial ribosomal protein bL25 family. CTC subfamily. As to quaternary structure, part of the 50S ribosomal subunit; part of the 5S rRNA/L5/L18/L25 subcomplex. Contacts the 5S rRNA. Binds to the 5S rRNA independently of L5 and L18.

Its function is as follows. This is one of the proteins that binds to the 5S RNA in the ribosome where it forms part of the central protuberance. The protein is Large ribosomal subunit protein bL25 of Paraburkholderia xenovorans (strain LB400).